Here is a 501-residue protein sequence, read N- to C-terminus: ATP synthase subunit alpha (501 aa).

ATP is bound at residue 169 to 176 (GDRQTGKT).

It belongs to the ATPase alpha/beta chains family. In terms of assembly, F-type ATPases have 2 components, CF(1) - the catalytic core - and CF(0) - the membrane proton channel. CF(1) has five subunits: alpha(3), beta(3), gamma(1), delta(1), epsilon(1). CF(0) has three main subunits: a(1), b(2) and c(9-12). The alpha and beta chains form an alternating ring which encloses part of the gamma chain. CF(1) is attached to CF(0) by a central stalk formed by the gamma and epsilon chains, while a peripheral stalk is formed by the delta and b chains.

It localises to the cell membrane. The enzyme catalyses ATP + H2O + 4 H(+)(in) = ADP + phosphate + 5 H(+)(out). In terms of biological role, produces ATP from ADP in the presence of a proton gradient across the membrane. The alpha chain is a regulatory subunit. The chain is ATP synthase subunit alpha from Streptococcus mutans serotype c (strain ATCC 700610 / UA159).